Here is a 198-residue protein sequence, read N- to C-terminus: Probable molybdenum cofactor guanylyltransferase (198 aa).

Residues 9–11 (LAG), lysine 22, aspartate 66, and aspartate 95 each bind GTP. A Mg(2+)-binding site is contributed by aspartate 95.

The protein belongs to the MobA family. Mg(2+) serves as cofactor.

It localises to the cytoplasm. It catalyses the reaction Mo-molybdopterin + GTP + H(+) = Mo-molybdopterin guanine dinucleotide + diphosphate. Its function is as follows. Transfers a GMP moiety from GTP to Mo-molybdopterin (Mo-MPT) cofactor (Moco or molybdenum cofactor) to form Mo-molybdopterin guanine dinucleotide (Mo-MGD) cofactor. This Clostridium perfringens (strain 13 / Type A) protein is Probable molybdenum cofactor guanylyltransferase.